Here is a 75-residue protein sequence, read N- to C-terminus: Small, acid-soluble spore protein Tlp (75 aa).

The protein belongs to the Tlp family.

The protein resides in the spore core. The chain is Small, acid-soluble spore protein Tlp from Geobacillus kaustophilus (strain HTA426).